Reading from the N-terminus, the 143-residue chain is Transcriptional regulator MraZ (143 aa).

2 consecutive SpoVT-AbrB domains span residues 5 to 47 (EYLH…PLDE) and 76 to 119 (ATEC…SQAL).

Belongs to the MraZ family. Forms oligomers.

It is found in the cytoplasm. The protein localises to the nucleoid. This chain is Transcriptional regulator MraZ, found in Desulfitobacterium hafniense (strain DSM 10664 / DCB-2).